Reading from the N-terminus, the 126-residue chain is Fatty acid-binding protein, liver (126 aa).

Ala-2 bears the N-acetylalanine mark.

This sequence belongs to the calycin superfamily. Fatty-acid binding protein (FABP) family.

The protein resides in the cytoplasm. In terms of biological role, binds free fatty acids and their coenzyme A derivatives, bilirubin, and some other small molecules in the cytoplasm. May be involved in intracellular lipid transport. The chain is Fatty acid-binding protein, liver (fabp1) from Schroederichthys bivius (Narrowmouthed catshark).